Here is a 128-residue protein sequence, read N- to C-terminus: Sulfurtransferase TusD (128 aa).

The active-site Cysteine persulfide intermediate is the Cys78.

The protein belongs to the DsrE/TusD family. Heterohexamer, formed by a dimer of trimers. The hexameric TusBCD complex contains 2 copies each of TusB, TusC and TusD. The TusBCD complex interacts with TusE.

Its subcellular location is the cytoplasm. Functionally, part of a sulfur-relay system required for 2-thiolation of 5-methylaminomethyl-2-thiouridine (mnm(5)s(2)U) at tRNA wobble positions. Accepts sulfur from TusA and transfers it in turn to TusE. This Klebsiella pneumoniae (strain 342) protein is Sulfurtransferase TusD.